We begin with the raw amino-acid sequence, 187 residues long: MGSGKPPLILASGSPRRKALLEALGYPIRVAVPGVEEEGLPLPPKALAQALARRKGEAVQGEWVLAADTVVDLDGEVLGKPKDPEENRLFLRRLSGRPHLVHTAFYLRTPKEVVEEVHTAKVFFRPLSEEEIAWYVGSGEGLDKAGGYGAQGLGMALLERVEGDFYTVVGLPVSRVFALLWARGFRP.

Aspartate 68 (proton acceptor) is an active-site residue.

Belongs to the Maf family. YhdE subfamily. A divalent metal cation serves as cofactor.

The protein localises to the cytoplasm. It catalyses the reaction dTTP + H2O = dTMP + diphosphate + H(+). It carries out the reaction UTP + H2O = UMP + diphosphate + H(+). In terms of biological role, nucleoside triphosphate pyrophosphatase that hydrolyzes dTTP and UTP. May have a dual role in cell division arrest and in preventing the incorporation of modified nucleotides into cellular nucleic acids. The sequence is that of dTTP/UTP pyrophosphatase from Thermus thermophilus (strain ATCC BAA-163 / DSM 7039 / HB27).